A 431-amino-acid chain; its full sequence is Adenylosuccinate lyase (431 aa).

Residues 4-5, 67-69, and 93-94 each bind N(6)-(1,2-dicarboxyethyl)-AMP; these read RY, NHD, and TS. The Proton donor/acceptor role is filled by histidine 141. Glutamine 212 contributes to the N(6)-(1,2-dicarboxyethyl)-AMP binding site. Serine 262 (proton donor/acceptor) is an active-site residue. Residues serine 263, 268 to 270, and 307 to 311 each bind N(6)-(1,2-dicarboxyethyl)-AMP; these read KKN and SVERY.

The protein belongs to the lyase 1 family. Adenylosuccinate lyase subfamily. Homotetramer. Residues from neighboring subunits contribute catalytic and substrate-binding residues to each active site.

It carries out the reaction N(6)-(1,2-dicarboxyethyl)-AMP = fumarate + AMP. The catalysed reaction is (2S)-2-[5-amino-1-(5-phospho-beta-D-ribosyl)imidazole-4-carboxamido]succinate = 5-amino-1-(5-phospho-beta-D-ribosyl)imidazole-4-carboxamide + fumarate. It participates in purine metabolism; AMP biosynthesis via de novo pathway; AMP from IMP: step 2/2. Its pathway is purine metabolism; IMP biosynthesis via de novo pathway; 5-amino-1-(5-phospho-D-ribosyl)imidazole-4-carboxamide from 5-amino-1-(5-phospho-D-ribosyl)imidazole-4-carboxylate: step 2/2. Functionally, catalyzes two reactions in de novo purine nucleotide biosynthesis. Catalyzes the breakdown of 5-aminoimidazole- (N-succinylocarboxamide) ribotide (SAICAR or 2-[5-amino-1-(5-phospho-beta-D-ribosyl)imidazole-4-carboxamido]succinate) to 5-aminoimidazole-4-carboxamide ribotide (AICAR or 5-amino-1-(5-phospho-beta-D-ribosyl)imidazole-4-carboxamide) and fumarate, and of adenylosuccinate (ADS or N(6)-(1,2-dicarboxyethyl)-AMP) to adenosine monophosphate (AMP) and fumarate. This chain is Adenylosuccinate lyase (purB), found in Thermotoga maritima (strain ATCC 43589 / DSM 3109 / JCM 10099 / NBRC 100826 / MSB8).